Reading from the N-terminus, the 476-residue chain is NADH-quinone oxidoreductase subunit N (476 aa).

The next 14 membrane-spanning stretches (helical) occupy residues 4 to 24 (LLALSPLILVCATAIVVMLTI), 32 to 52 (LTATLTVVGLNLALAAQVVAW), 67 to 87 (GLAVFGGVLILIATLACATLG), 100 to 117 (EYYLLLLCAAAGGLALVS), 121 to 141 (LAALFFGLELLSMPLYGMLAY), 155 to 175 (YMVLSAAASAFLLFGMALLYS), 198 to 218 (LMAGMGMMLIGLGFKLSIVPF), 230 to 250 (PAPAATFLASASKVAVLLVLL), 263 to 283 (LHSLLAVLAFVTMLVGNLLAL), 291 to 311 (LLGYSSIAHFGYLLVALVVND), 319 to 339 (ALYLVTYVLTTLGAFGVVTLL), 366 to 386 (AVLTVMMLSLAGIPFTAGFIG), 406 to 426 (VVAGSAIGLYYYLRVMVTLFL), and 447 to 467 (VVVLGLAALVVVLGVYPAPMI).

Belongs to the complex I subunit 2 family. As to quaternary structure, NDH-1 is composed of 14 different subunits. Subunits NuoA, H, J, K, L, M, N constitute the membrane sector of the complex.

It is found in the cell inner membrane. The catalysed reaction is a quinone + NADH + 5 H(+)(in) = a quinol + NAD(+) + 4 H(+)(out). Its function is as follows. NDH-1 shuttles electrons from NADH, via FMN and iron-sulfur (Fe-S) centers, to quinones in the respiratory chain. The immediate electron acceptor for the enzyme in this species is believed to be ubiquinone. Couples the redox reaction to proton translocation (for every two electrons transferred, four hydrogen ions are translocated across the cytoplasmic membrane), and thus conserves the redox energy in a proton gradient. This is NADH-quinone oxidoreductase subunit N from Chromohalobacter salexigens (strain ATCC BAA-138 / DSM 3043 / CIP 106854 / NCIMB 13768 / 1H11).